A 533-amino-acid polypeptide reads, in one-letter code: Probable bifunctional tRNA threonylcarbamoyladenosine biosynthesis protein (533 aa).

The segment at 1–329 is kae1; it reads MTRVLGIEGT…FRPDEVPVSW (329 aa). The Fe cation site is built by His113 and His117. L-threonylcarbamoyladenylate contacts are provided by residues 134 to 138, Asp166, Gly179, Glu183, and Asn262; that span reads NASGA. Asp290 provides a ligand contact to Fe cation. Positions 338 to 533 constitute a Protein kinase domain; it reads PVPTDERRQG…REIETRGRYQ (196 aa). Residues 345–352 and Lys363 contribute to the ATP site; that span reads RQGAEAVV. The active-site Proton acceptor; for kinase activity is the Asp452.

The protein in the N-terminal section; belongs to the KAE1 / TsaD family. In the C-terminal section; belongs to the protein kinase superfamily. Tyr protein kinase family. BUD32 subfamily. In terms of assembly, component of the KEOPS complex that consists of Kae1, Bud32, Cgi121 and Pcc1; the whole complex dimerizes. It depends on Fe(2+) as a cofactor.

The protein resides in the cytoplasm. The catalysed reaction is L-seryl-[protein] + ATP = O-phospho-L-seryl-[protein] + ADP + H(+). It catalyses the reaction L-threonyl-[protein] + ATP = O-phospho-L-threonyl-[protein] + ADP + H(+). The enzyme catalyses L-threonylcarbamoyladenylate + adenosine(37) in tRNA = N(6)-L-threonylcarbamoyladenosine(37) in tRNA + AMP + H(+). Its function is as follows. Required for the formation of a threonylcarbamoyl group on adenosine at position 37 (t(6)A37) in tRNAs that read codons beginning with adenine. Is a component of the KEOPS complex that is probably involved in the transfer of the threonylcarbamoyl moiety of threonylcarbamoyl-AMP (TC-AMP) to the N6 group of A37. The Kae1 domain likely plays a direct catalytic role in this reaction. The Bud32 domain probably displays kinase activity that regulates Kae1 function. This chain is Probable bifunctional tRNA threonylcarbamoyladenosine biosynthesis protein, found in Natronomonas pharaonis (strain ATCC 35678 / DSM 2160 / CIP 103997 / JCM 8858 / NBRC 14720 / NCIMB 2260 / Gabara) (Halobacterium pharaonis).